The primary structure comprises 467 residues: Ran-binding protein M homolog (467 aa).

Positions 1–25 (MNSSPPPANSANGDTTNNGENGQDL) are disordered. Residues 9–25 (NSANGDTTNNGENGQDL) are compositionally biased toward polar residues. A B30.2/SPRY domain is found at 31-219 (DKIRLSAKRD…VLVNFGKKKF (189 aa)). The 33-residue stretch at 244–276 (PPNIGYGLVKTYLLHYGYEETLDAFNLATKNTV) folds into the LisH domain. Positions 295–353 (ALKQRKNLRQLVRNGEIDTALAELQKLYPQIVQDDKSVVCFLLHCQKFIELVRVGKLEE) constitute a CTLH domain.

This sequence belongs to the RANBP9/10 family. In terms of assembly, interacts with WDR36, WDS, GID8, MAEA and RMD5.

The protein resides in the cytoplasm. It is found in the nucleus. It localises to the perinuclear region. This chain is Ran-binding protein M homolog, found in Arabidopsis thaliana (Mouse-ear cress).